The primary structure comprises 118 residues: MSCQQSQQQCQPPPKCTPKCPPKCPTPKCPPKCPPKCPPVSSCCSVSSGGCCGSSSGGCCSSGGGGCCSSGGGGCCLSHHRRRRSHRHRPQSSDCCSQPSAGSSCCGGGSGQHSGGCC.

Residues 1-10 (MSCQQSQQQC) show a composition bias toward low complexity. Disordered regions lie at residues 1–23 (MSCQ…CPPK) and 82–118 (RRRS…GGCC). Residues 11 to 23 (QPPPKCTPKCPPK) show a composition bias toward pro residues. Over residues 95–104 (CCSQPSAGSS) the composition is skewed to low complexity. Residues 105–118 (CCGGGSGQHSGGCC) show a composition bias toward gly residues.

Belongs to the LCE family. In terms of tissue distribution, skin-specific. Expression was readily detected in adult trunk skin, adult arm skin, fetal skin, penal skin, vulva, esophagus and tongue. Not expressed in the cervix, rectum, lung, colon, or placenta. Expression is observed in the fibroblasts.

Functionally, precursors of the cornified envelope of the stratum corneum. The chain is Late cornified envelope protein 1F (LCE1F) from Homo sapiens (Human).